A 188-amino-acid chain; its full sequence is Cytochrome b561 homolog 2 (188 aa).

Residues 1 to 15 (MSFTNTPERYGVISA) lie on the Cytoplasmic side of the membrane. Residues 16–36 (AFHWLSAIIVYGMFALGLWMV) form a helical membrane-spanning segment. Residues His-18 and His-52 each contribute to the heme b site. Topologically, residues 37–54 (TLSYYDGWYHKAPELHKS) are periplasmic. A helical transmembrane segment spans residues 55-75 (IGILLMMGLVIRVLWRVISPP). At 76–91 (PGPLPSYSPMTRLAAR) the chain is on the cytoplasmic side. The chain crosses the membrane as a helical span at residues 92-112 (AGHLALYLLLFAIGISGYLIS). Residues 113 to 143 (TADGKPISVFGWFDVPATLADAGAQADFAGA) lie on the Periplasmic side of the membrane. A helical transmembrane segment spans residues 144–164 (LHFWLAWSVVVLSVMHGFMAL). Heme b contacts are provided by His-145 and His-159. At 165-188 (KHHFIDKDDTLKRMLGKSSSDYGV) the chain is on the cytoplasmic side.

The protein belongs to the cytochrome b561 family. The cofactor is heme b.

The protein localises to the cell inner membrane. The polypeptide is Cytochrome b561 homolog 2 (yceJ) (Escherichia coli (strain K12)).